Reading from the N-terminus, the 157-residue chain is Heat shock protein beta-9 (157 aa).

Residues 1–17 show a composition bias toward low complexity; sequence MQRVGSSLPSGSQSASQ. Disordered stretches follow at residues 1–20 and 136–157; these read MQRV…QCPS and PPSE…KKLA. One can recognise a sHSP domain in the interval 35 to 148; that stretch reads QRLTEDAAAV…EAQTGPASRF (114 aa). Basic residues predominate over residues 148 to 157; it reads FRSRGSKKLA.

The protein belongs to the small heat shock protein (HSP20) family.

It localises to the cytoplasm. The protein resides in the nucleus. This Bos taurus (Bovine) protein is Heat shock protein beta-9 (HSPB9).